Consider the following 146-residue polypeptide: Ribonuclease H (146 aa).

Positions Met-1 to Asp-142 constitute an RNase H type-1 domain. Mg(2+) is bound by residues Asp-9, Glu-47, Asp-70, and Asp-134.

It belongs to the RNase H family. As to quaternary structure, monomer. The cofactor is Mg(2+).

It localises to the cytoplasm. The enzyme catalyses Endonucleolytic cleavage to 5'-phosphomonoester.. Functionally, endonuclease that specifically degrades the RNA of RNA-DNA hybrids. The sequence is that of Ribonuclease H from Ruthia magnifica subsp. Calyptogena magnifica.